Reading from the N-terminus, the 134-residue chain is MGAIGFTGPFWIYFKRAADKKTFRSVAVFLVRAVILLIFAAFGNIGSIKKSKILLLKFSIINIIMLLFGIAQIIVTNVVDCENDPDNSFSFLCSNSEGAYYAPMILLLAVNLCGAVFGLILRYVIVHDTKGNYY.

3 consecutive transmembrane segments (helical) span residues 26–46 (VAVF…GNIG), 55–75 (LLKF…QIIV), and 101–121 (YAPM…GLIL).

The protein localises to the membrane. This is an uncharacterized protein from Dictyostelium discoideum (Social amoeba).